The primary structure comprises 372 residues: MVTGCVDLHQSFKSADSSSVPIPPPLPSKSDGLKKKLGHSSVSTATRDMWDRLFNDGYKADVVIYTDNGSIIYAHANILGTASTVIKGMLKQAKRHGKWHTISIRGVPHDAVRVFIRFLYSSCYEKEEMNEFIMHLLLLSHAYVVPQLKRVCEWHLEHGLLTTENVVDVFQLALLCDFPRLSLISHRMIMKHFNELSATEAWTAMKKSHPFLEKEVRDSVIIEANTRKERMRKRNDQRIYSQLYEAMEALVHICRDGCKTIGPHDKDFKPNHATCNYEACKGLESLIRHFAGCKLRVPGGCVHCKRMWQLLELHSRVCAGSDQCRVPLCRNLKEKMEKQSKKDESRWKLLVKNVLGSKKIGGSPFFLPVTNC.

A disordered region spans residues 14-37 (SADSSSVPIPPPLPSKSDGLKKKL). The BTB domain maps to 60 to 128 (ADVVIYTDNG…LYSSCYEKEE (69 aa)). A TAZ-type zinc finger spans residues 238-330 (RIYSQLYEAM…SDQCRVPLCR (93 aa)). The tract at residues 341 to 364 (KKDESRWKLLVKNVLGSKKIGGSP) is caM-binding.

As to quaternary structure, interacts with GTE11/BET10 through the BTB domain. In terms of tissue distribution, preferentially expressed in leaves, stems and flowers.

Its subcellular location is the cytoplasm. It participates in protein modification; protein ubiquitination. Functionally, may act as a substrate-specific adapter of an E3 ubiquitin-protein ligase complex (CUL3-RBX1-BTB) which mediates the ubiquitination and subsequent proteasomal degradation of target proteins. This chain is BTB/POZ and TAZ domain-containing protein 4 (BT4), found in Arabidopsis thaliana (Mouse-ear cress).